The primary structure comprises 429 residues: tRNA (guanine(9)-N1)-methyltransferase (429 aa).

Positions 131-379 (KERKEAQRRI…AVIPIRKYAP (249 aa)) constitute an SAM-dependent MTase TRM10-type domain. S-adenosyl-L-methionine contacts are provided by residues 285–286 (LS), Gly305, 309–313 (DRNRH), Cys317, Leu331, and 344–346 (KAL). The active-site Proton acceptor is Asp309. The tract at residues 383–429 (AKRAKTETKRNEKVEEEVECTSAEGEEDIGVIEESAEVDPEDVFSNQ) is disordered. Basic and acidic residues predominate over residues 386–395 (AKTETKRNEK). A compositionally biased stretch (acidic residues) spans 396-429 (VEEEVECTSAEGEEDIGVIEESAEVDPEDVFSNQ).

Belongs to the class IV-like SAM-binding methyltransferase superfamily. TRM10 family. Monomer.

It localises to the cytoplasm. Its subcellular location is the nucleus. It catalyses the reaction guanosine(9) in tRNA + S-adenosyl-L-methionine = N(1)-methylguanosine(9) in tRNA + S-adenosyl-L-homocysteine + H(+). In terms of biological role, S-adenosyl-L-methionine-dependent guanine N(1)-methyltransferase that catalyzes the formation of N(1)-methylguanine at position 9 (m1G9) in cytoplasmic tRNA. The sequence is that of tRNA (guanine(9)-N1)-methyltransferase from Cryptococcus neoformans var. neoformans serotype D (strain B-3501A) (Filobasidiella neoformans).